A 273-amino-acid chain; its full sequence is Exosome complex component MTR3 (273 aa).

The disordered stretch occupies residues 1–36; that stretch reads MPGDHRRIRGPEESQPPQLYAAEDDETPAARDPTRL.

Belongs to the RNase PH family. As to quaternary structure, component of the RNA exosome core complex (Exo-9), composed of EXOSC1, EXOSC2, EXOSC3, EXOSC4, EXOSC5, EXOSC6, EXOSC7, EXOSC8 and EXOSC9; within the complex interacts with EXOSC1, EXOSC7 and EXOSC8. The catalytically inactive RNA exosome core complex (Exo-9) associates with the catalytic subunit EXOSC10/RRP6. Exo-9 may associate with DIS3 to form the nucleolar exosome complex, or DIS3L to form the cytoplasmic exosome complex. Exo-9 is formed by a hexameric base ring consisting of the heterodimers EXOSC4-EXOSC9, EXOSC5-EXOSC8 and EXOSC6-EXOSC7, and a cap ring consisting of EXOSC1, EXOSC2 and EXOSC3. The RNA exosome complex associates with cofactors EXOSC10/RRP6, C1D/RRP47, MPHOSPH6/MPP6 and MTREX/MTR4.

Its subcellular location is the cytoplasm. The protein localises to the nucleus. The protein resides in the nucleolus. Its function is as follows. Non-catalytic component of the RNA exosome complex which has 3'-&gt;5' exoribonuclease activity and participates in a multitude of cellular RNA processing and degradation events. In the nucleus, the RNA exosome complex is involved in proper maturation of stable RNA species such as rRNA, snRNA and snoRNA, in the elimination of RNA processing by-products and non-coding 'pervasive' transcripts, such as antisense RNA species and promoter-upstream transcripts (PROMPTs), and of mRNAs with processing defects, thereby limiting or excluding their export to the cytoplasm. The RNA exosome may be involved in Ig class switch recombination (CSR) and/or Ig variable region somatic hypermutation (SHM) by targeting AICDA deamination activity to transcribed dsDNA substrates. In the cytoplasm, the RNA exosome complex is involved in general mRNA turnover and specifically degrades inherently unstable mRNAs containing AU-rich elements (AREs) within their 3' untranslated regions, and in RNA surveillance pathways, preventing translation of aberrant mRNAs. It seems to be involved in degradation of histone mRNA. The catalytic inactive RNA exosome core complex of 9 subunits (Exo-9) is proposed to play a pivotal role in the binding and presentation of RNA for ribonucleolysis, and to serve as a scaffold for the association with catalytic subunits and accessory proteins or complexes. This Mus musculus (Mouse) protein is Exosome complex component MTR3 (Exosc6).